The primary structure comprises 420 residues: Glucose-1-phosphate adenylyltransferase (420 aa).

Residues Tyr-97, Gly-162, 177–178 (EK), and Ser-188 each bind alpha-D-glucose 1-phosphate.

It belongs to the bacterial/plant glucose-1-phosphate adenylyltransferase family. In terms of assembly, homotetramer.

It catalyses the reaction alpha-D-glucose 1-phosphate + ATP + H(+) = ADP-alpha-D-glucose + diphosphate. It participates in glycan biosynthesis; glycogen biosynthesis. Functionally, involved in the biosynthesis of ADP-glucose, a building block required for the elongation reactions to produce glycogen. Catalyzes the reaction between ATP and alpha-D-glucose 1-phosphate (G1P) to produce pyrophosphate and ADP-Glc. The protein is Glucose-1-phosphate adenylyltransferase of Pseudothermotoga lettingae (strain ATCC BAA-301 / DSM 14385 / NBRC 107922 / TMO) (Thermotoga lettingae).